The sequence spans 143 residues: Transcriptional regulator MraZ (143 aa).

SpoVT-AbrB domains lie at 5–47 (EYRH…TQEE) and 76–119 (ATEC…SEDR).

This sequence belongs to the MraZ family. In terms of assembly, forms oligomers.

The protein localises to the cytoplasm. It localises to the nucleoid. In Ligilactobacillus salivarius (strain UCC118) (Lactobacillus salivarius), this protein is Transcriptional regulator MraZ.